The sequence spans 245 residues: 8-amino-3,8-dideoxy-manno-octulosonate cytidylyltransferase (245 aa).

Belongs to the KdsB family.

The protein resides in the cytoplasm. It carries out the reaction 8-amino-3,8-dideoxy-alpha-D-manno-octulosonate + CTP = CMP-8-amino-3,8-dideoxy-alpha-D-manno-oct-2-ulosonate + diphosphate. The protein operates within bacterial outer membrane biogenesis; lipopolysaccharide biosynthesis. In terms of biological role, activates KDO8N (a required 8-carbon sugar) for incorporation into bacterial lipopolysaccharide in the Shewanella genus. This chain is 8-amino-3,8-dideoxy-manno-octulosonate cytidylyltransferase, found in Shewanella baltica (strain OS195).